The following is a 203-amino-acid chain: Glycerol-3-phosphate acyltransferase (203 aa).

A run of 4 helical transmembrane segments spans residues 4–24 (MAVT…AVLI), 80–100 (PVLL…PLFF), 117–137 (PIGL…AILF), and 139–159 (YSSL…WMIK).

Belongs to the PlsY family. Probably interacts with PlsX.

It localises to the cell inner membrane. It carries out the reaction an acyl phosphate + sn-glycerol 3-phosphate = a 1-acyl-sn-glycero-3-phosphate + phosphate. It participates in lipid metabolism; phospholipid metabolism. Functionally, catalyzes the transfer of an acyl group from acyl-phosphate (acyl-PO(4)) to glycerol-3-phosphate (G3P) to form lysophosphatidic acid (LPA). This enzyme utilizes acyl-phosphate as fatty acyl donor, but not acyl-CoA or acyl-ACP. The polypeptide is Glycerol-3-phosphate acyltransferase (Vibrio vulnificus (strain YJ016)).